We begin with the raw amino-acid sequence, 276 residues long: Formamidopyrimidine-DNA glycosylase (276 aa).

The Schiff-base intermediate with DNA role is filled by proline 2. Residue glutamate 3 is the Proton donor of the active site. Catalysis depends on lysine 58, which acts as the Proton donor; for beta-elimination activity. DNA-binding residues include histidine 92, arginine 111, and lysine 154. The FPG-type zinc finger occupies 239–273; sequence QVYGHVGEPCPVCGTKFEKIKVNGRGTTFCPHCQV. The active-site Proton donor; for delta-elimination activity is arginine 263.

It belongs to the FPG family. As to quaternary structure, monomer. Zn(2+) serves as cofactor.

It catalyses the reaction Hydrolysis of DNA containing ring-opened 7-methylguanine residues, releasing 2,6-diamino-4-hydroxy-5-(N-methyl)formamidopyrimidine.. The catalysed reaction is 2'-deoxyribonucleotide-(2'-deoxyribose 5'-phosphate)-2'-deoxyribonucleotide-DNA = a 3'-end 2'-deoxyribonucleotide-(2,3-dehydro-2,3-deoxyribose 5'-phosphate)-DNA + a 5'-end 5'-phospho-2'-deoxyribonucleoside-DNA + H(+). Involved in base excision repair of DNA damaged by oxidation or by mutagenic agents. Acts as a DNA glycosylase that recognizes and removes damaged bases. Has a preference for oxidized purines, such as 7,8-dihydro-8-oxoguanine (8-oxoG). Has AP (apurinic/apyrimidinic) lyase activity and introduces nicks in the DNA strand. Cleaves the DNA backbone by beta-delta elimination to generate a single-strand break at the site of the removed base with both 3'- and 5'-phosphates. The protein is Formamidopyrimidine-DNA glycosylase of Lactobacillus helveticus (strain DPC 4571).